Consider the following 517-residue polypeptide: Probable anion transporter 6, chloroplastic (517 aa).

Residues 51–73 are disordered; it reads TERVRESKKLPPKDPIEDPKPQL. Basic and acidic residues predominate over residues 52–70; it reads ERVRESKKLPPKDPIEDPK. 10 helical membrane passes run 130 to 150, 170 to 190, 229 to 249, 255 to 275, 312 to 332, 352 to 372, 397 to 417, 420 to 440, 452 to 472, and 484 to 504; these read FGWSSSVAGLVQSSFFWGYAL, IGVFTWSFATALVPLLAGFMP, FVFGGLSLGSVMGLLLAPPII, ESVFYLFGLLGVGWFVGFQFL, SFFQSPAVWAMIYTHFCGSWG, LTEAAWVSILPPLASIVVTSL, IAFVAPAICMTLSSVDIGLPP, IVGILTAGLALSSFALSGLYC, ILLGITNTVGAVPGIVGVALT, and MSLFVPSIFFYLTGTVVWLAF.

The protein belongs to the major facilitator superfamily. Sodium/anion cotransporter (TC 2.A.1.14) family. As to expression, expressed in leaf veins and sepals.

It localises to the plastid. The protein resides in the chloroplast membrane. Functionally, inorganic phosphate and probable anion transporter. In Arabidopsis thaliana (Mouse-ear cress), this protein is Probable anion transporter 6, chloroplastic (ANTR6).